Reading from the N-terminus, the 277-residue chain is Shikimate dehydrogenase (NADP(+)) (277 aa).

Shikimate is bound by residues 15–17 (SLS) and Thr-62. Residue Lys-66 is the Proton acceptor of the active site. Shikimate is bound by residues Asn-87 and Asp-102. NADP(+)-binding positions include 127 to 131 (GAGGA), 151 to 156 (NRTVDK), and Ile-219. Position 221 (Tyr-221) interacts with shikimate. Gly-242 is a binding site for NADP(+).

The protein belongs to the shikimate dehydrogenase family. In terms of assembly, homodimer.

The enzyme catalyses shikimate + NADP(+) = 3-dehydroshikimate + NADPH + H(+). Its pathway is metabolic intermediate biosynthesis; chorismate biosynthesis; chorismate from D-erythrose 4-phosphate and phosphoenolpyruvate: step 4/7. Functionally, involved in the biosynthesis of the chorismate, which leads to the biosynthesis of aromatic amino acids. Catalyzes the reversible NADPH linked reduction of 3-dehydroshikimate (DHSA) to yield shikimate (SA). This Bacillus thuringiensis subsp. konkukian (strain 97-27) protein is Shikimate dehydrogenase (NADP(+)).